Here is a 683-residue protein sequence, read N- to C-terminus: MALFVRLLALALALALGPAATLAGPAKSPYQLVLQHSRLRRQQHGPNVCAVQKVIGTNRKYFTNCKQWYQRKICGKSTVISYECCPGYEKVPGERSCPAALPLANLYETLGVVGSTTTQLYTDRTEKLRPEMEGPGRFTIFAPSNEAWASLPAEVLDSLVSNVNIELLNALRYHMVDRRVLTDELKHGMALTSMYQNSKFQIHHYPNGIVTVNCARLLKADHHATNGVVHLIDKVISTVTNNIQQIIEIEDTFETLRAAVAASGLNTLLESDGQFTLLAPTNEAKEKIPTETLNRILGDPEALRDLLNNHILKSAMCAEAIVAGLSMETLEATTLEVGCSGDMLTINGKAIISNKDVLATNGVIHFIDELLIPDSAKTLSELAAGSDVSTAIDLFGQAGLGTHLSGNERLTLLAPLNSVFEEGAPPIDAHTRNLLRNHIIKDQLASKYLYHGQTLDTLGGKKLRVFVYRNSLCIENSCIAAHDKRGRYGTLFTMDRMLTPPSGTVMDVLKGDNRFSMLVAAIQFRRLTETLNREGAYTVFAPTNEAFQALPPGELNKLLGNAKELADILKYHVGEEILVSGGIGTLVRLKSLQGDKLEVSSKNNAVSVNKEPVAESDIMATNGVVYAITSVLQPPANRPQERGDELADSALEIFKQASAFSRASQRSVRLAPVYQRLLERMKH.

The first 23 residues, 1–23 (MALFVRLLALALALALGPAATLA), serve as a signal peptide directing secretion. Phosphoserine is present on serine 37. The EMI domain maps to 45–99 (GPNVCAVQKVIGTNRKYFTNCKQWYQRKICGKSTVISYECCPGYEKVPGERSCPA). 5 disulfide bridges follow: cysteine 49–cysteine 85, cysteine 74–cysteine 339, cysteine 84–cysteine 97, cysteine 214–cysteine 317, and cysteine 473–cysteine 478. S-cysteinyl cysteine is present on cysteine 65. 4 FAS1 domains span residues 103–236 (LANL…DKVI), 240–371 (TNNI…DELL), 375–498 (SAKT…DRML), and 502–632 (SGTV…TSVL). The Cell attachment site signature appears at 642-644 (RGD).

Binds to type I, II, and IV collagens. Gamma-carboxylation is controversial. Gamma-carboxyglutamated; gamma-carboxyglutamate residues are formed by vitamin K dependent carboxylation; this may be required for calcium binding. According to a more recent report, does not contain vitamin K-dependent gamma-carboxyglutamate residues. In terms of processing, the EMI domain contains 2 expected intradomain disulfide bridges (Cys-49-Cys85 and Cys-84-Cys-97) and one unusual interdomain disulfide bridge to the second FAS1 domain (Cys-74-Cys-339). This arrangement violates the predicted disulfide bridge pattern of an EMI domain. As to expression, located primarily in the epithelium of normal adult cornea, in fetal stromal cells, and both endothelium- and stroma-derived cells in healing corneal wounds. Not expressed in normal adult endothelium and stroma.

It localises to the secreted. It is found in the extracellular space. The protein resides in the extracellular matrix. Plays a role in cell adhesion. May play a role in cell-collagen interactions. The chain is Transforming growth factor-beta-induced protein ig-h3 (TGFBI) from Oryctolagus cuniculus (Rabbit).